Consider the following 474-residue polypeptide: MTKKLHIKTWGCQMNEYDSSKMADLLASTHGYQLTTIPEEADLLLLNTCSIREKAQEKVFSLLGQWKLLKEKNPQLIIGVGGCVASQEGEQLRQRAPCVDVIFGPQTLHRLPEMINHVQGTNSPVVDISFPEIEKFDRLPEPRAEGPTAFVSIMEGCNKYCTFCVVPYTRGEEVSRPSDDILFEIAQLAAQGVREVNLLGQNVNAYRGATYDGDICSFAELLRLVAAIDGIDRVRFTTSHPIEFTDDIIDVYRDTPELVSFLHLPVQSGSDRILTMMKRAHTALEYKAIIRKLRQARPDIQISSDFIVGFPGETQQDFEQTMKLVADIHFDTSYSFIYSPRPGTPAADLPDNVSEEEKKQRLHILQQRISQQAMEISRKMVGTVQRVLVEGTSRKNVMELAGRTENNRVVNFEGSPDMIGKFVDVEIVNVYASSLRGILLRTEDQMDLRTHESPQSVIARTRKENEIGVGIYQP.

In terms of domain architecture, MTTase N-terminal spans 3–120 (KKLHIKTWGC…LPEMINHVQG (118 aa)). 6 residues coordinate [4Fe-4S] cluster: C12, C49, C83, C157, C161, and C164. The 233-residue stretch at 143–375 (RAEGPTAFVS…QQRISQQAME (233 aa)) folds into the Radical SAM core domain. Residues 378-441 (RKMVGTVQRV…ASSLRGILLR (64 aa)) form the TRAM domain.

It belongs to the methylthiotransferase family. MiaB subfamily. As to quaternary structure, monomer. The cofactor is [4Fe-4S] cluster.

It localises to the cytoplasm. It catalyses the reaction N(6)-dimethylallyladenosine(37) in tRNA + (sulfur carrier)-SH + AH2 + 2 S-adenosyl-L-methionine = 2-methylsulfanyl-N(6)-dimethylallyladenosine(37) in tRNA + (sulfur carrier)-H + 5'-deoxyadenosine + L-methionine + A + S-adenosyl-L-homocysteine + 2 H(+). In terms of biological role, catalyzes the methylthiolation of N6-(dimethylallyl)adenosine (i(6)A), leading to the formation of 2-methylthio-N6-(dimethylallyl)adenosine (ms(2)i(6)A) at position 37 in tRNAs that read codons beginning with uridine. This is tRNA-2-methylthio-N(6)-dimethylallyladenosine synthase from Yersinia pestis bv. Antiqua (strain Angola).